The sequence spans 397 residues: Ethanolaminephosphotransferase 1 (397 aa).

Position 2 is an N-acetylalanine (A2). Transmembrane regions (helical) follow at residues 47-69 (WLAP…LLMA), 84-103 (HVPD…AYTL), 123-145 (LFDH…SIFG), 150-172 (GVSV…LSHW), 179-201 (ILFL…IVTA), 221-243 (LFTA…LNFF), 256-278 (VYEA…AWIL), 291-310 (VFYF…LIVC), 317-339 (CPTL…LGVA), and 344-366 (SILL…VRVV). U387 is a non-standard amino acid (selenocysteine).

The protein belongs to the CDP-alcohol phosphatidyltransferase class-I family. It depends on Mg(2+) as a cofactor. The cofactor is Mn(2+).

It is found in the endoplasmic reticulum membrane. The enzyme catalyses CDP-ethanolamine + a 1,2-diacyl-sn-glycerol = a 1,2-diacyl-sn-glycero-3-phosphoethanolamine + CMP + H(+). The catalysed reaction is 1-O-alkyl-2-acyl-sn-glycerol + CDP-ethanolamine = a 1-O-alkyl-2-acyl-sn-glycero-3-phosphoethanolamine + CMP + H(+). Its pathway is phospholipid metabolism; phosphatidylethanolamine biosynthesis; phosphatidylethanolamine from ethanolamine: step 3/3. Functionally, ethanolaminephosphotransferase that catalyzes the transfer of phosphoethanolamine (PE) from CDP-ethanolamine to lipid acceptors, the final step in the synthesis of PE via the 'Kennedy' pathway. PE is the second most abundant phospholipid of membranes in mammals and is involved in various membrane-related cellular processes. The enzyme is critical for the synthesis of several PE species and also catalyzes the synthesis of plasmanyl-PE, a lipid required for proper myelination and neurodevelopment, from 1-alkyl-2-acylglycerol. The protein is Ethanolaminephosphotransferase 1 of Pongo abelii (Sumatran orangutan).